The sequence spans 146 residues: Hemoglobin subunit beta-1 (146 aa).

Residues 2–146 (HWTAEEKHLL…VAHALARRYH (145 aa)) enclose the Globin domain. The heme b site is built by H63 and H92.

The protein belongs to the globin family. As to quaternary structure, there are three forms of hemoglobin in Sphenodon: A, A' and D. Hb A is a tetramer of two alpha-A and two beta-1, Hb A' is a tetramer of two alpha-a and two beta-2, Hb D is a tetramer of two alpha-D and two beta-2.

In terms of biological role, involved in oxygen transport from the lung to the various peripheral tissues. This is Hemoglobin subunit beta-1 (HBB1) from Sphenodon punctatus (Tuatara).